The following is a 780-amino-acid chain: Tricorn protease-interacting factor F3 (780 aa).

Substrate contacts are provided by residues Glu101 and 230–234 (GAMEN). His265 serves as a coordination point for Zn(2+). Glu266 (proton acceptor) is an active-site residue. 2 residues coordinate Zn(2+): His269 and Glu288.

This sequence belongs to the peptidase M1 family. In terms of assembly, part of the tricorn proteolytic complex. Requires Zn(2+) as cofactor.

Its subcellular location is the cytoplasm. Functionally, proteases F1, F2 and F3 degrade oligopeptides produced by Tricorn (themselves probably produced by the proteasome), yielding free amino acids. This Thermoplasma acidophilum (strain ATCC 25905 / DSM 1728 / JCM 9062 / NBRC 15155 / AMRC-C165) protein is Tricorn protease-interacting factor F3 (trf3).